A 274-amino-acid polypeptide reads, in one-letter code: Photosystem II extrinsic protein O (274 aa).

Residues 1-28 form the signal peptide; that stretch reads MRFRPSIVALLSVCFGLLTFLYSGSAFA.

This sequence belongs to the PsbO family. As to quaternary structure, PSII is composed of 1 copy each of membrane proteins PsbA, PsbB, PsbC, PsbD, PsbE, PsbF, PsbH, PsbI, PsbJ, PsbK, PsbL, PsbM, PsbT, PsbX, PsbY, PsbZ, Psb30/Ycf12, peripheral proteins PsbO, CyanoQ (PsbQ), PsbU, PsbV and a large number of cofactors. It forms dimeric complexes. Contacts PsbQ.

Its subcellular location is the cellular thylakoid membrane. In terms of biological role, one of the extrinsic, lumenal subunits of photosystem II (PSII), which stabilize and protect the oxygen-evolving complex. PSII is a light-driven water plastoquinone oxidoreductase, using light energy to abstract electrons from H(2)O, generating a proton gradient subsequently used for ATP formation. Required for dimerization of PSII and for binding of PsbQ to PSII. In Synechocystis sp. (strain ATCC 27184 / PCC 6803 / Kazusa), this protein is Photosystem II extrinsic protein O.